A 206-amino-acid chain; its full sequence is Uridine kinase (206 aa).

Residue 11–18 participates in ATP binding; sequence GGSGSGKT.

Belongs to the uridine kinase family.

Its subcellular location is the cytoplasm. The enzyme catalyses uridine + ATP = UMP + ADP + H(+). It carries out the reaction cytidine + ATP = CMP + ADP + H(+). It functions in the pathway pyrimidine metabolism; CTP biosynthesis via salvage pathway; CTP from cytidine: step 1/3. It participates in pyrimidine metabolism; UMP biosynthesis via salvage pathway; UMP from uridine: step 1/1. In Macrococcus caseolyticus (strain JCSC5402) (Macrococcoides caseolyticum), this protein is Uridine kinase.